The sequence spans 320 residues: Ferrochelatase (320 aa).

Residues His194 and Glu275 each coordinate Fe cation.

It belongs to the ferrochelatase family.

Its subcellular location is the cytoplasm. The catalysed reaction is heme b + 2 H(+) = protoporphyrin IX + Fe(2+). Its pathway is porphyrin-containing compound metabolism; protoheme biosynthesis; protoheme from protoporphyrin-IX: step 1/1. Functionally, catalyzes the ferrous insertion into protoporphyrin IX. This Xylella fastidiosa (strain 9a5c) protein is Ferrochelatase.